We begin with the raw amino-acid sequence, 205 residues long: Pyridoxal 5'-phosphate synthase subunit PdxT (205 aa).

52–54 is an L-glutamine binding site; that stretch reads GES. C84 serves as the catalytic Nucleophile. L-glutamine-binding positions include R116 and 145 to 146; that span reads IR. Active-site charge relay system residues include H185 and E187.

Belongs to the glutaminase PdxT/SNO family. In the presence of PdxS, forms a dodecamer of heterodimers. Only shows activity in the heterodimer.

The catalysed reaction is aldehydo-D-ribose 5-phosphate + D-glyceraldehyde 3-phosphate + L-glutamine = pyridoxal 5'-phosphate + L-glutamate + phosphate + 3 H2O + H(+). It catalyses the reaction L-glutamine + H2O = L-glutamate + NH4(+). The protein operates within cofactor biosynthesis; pyridoxal 5'-phosphate biosynthesis. Functionally, catalyzes the hydrolysis of glutamine to glutamate and ammonia as part of the biosynthesis of pyridoxal 5'-phosphate. The resulting ammonia molecule is channeled to the active site of PdxS. The chain is Pyridoxal 5'-phosphate synthase subunit PdxT from Staphylothermus marinus (strain ATCC 43588 / DSM 3639 / JCM 9404 / F1).